The following is a 679-amino-acid chain: MSKNLLIELGLEELPAYVVTPSEKQLGERLATFLTENRLSFEDIQTFSTPRRLAVRVSGLAAQQTDLTEDFKGPAKKIALDADGNFSKAAQGFVRGKGLTTDAIEFREVKGEEYVYVTKHEAGKPAKEVLLGVTEVLSAMTFPVSMHWANNSFEYIRPVHTLTVLLNDEALELDFLDIHSGRVSRGHRFLGTETTITSADSYEADLRSQFVIADAKERQEMIVEQIKAIEAAQGVQVDIDADLLNEVLNLVEFPTAFMGSFDAKYLDVPEEVLVTSMKNHQRYFVVRDQEGHLMPNFVSVRNGNDQAIENVIKGNEKVLVARLEDGEFFWREDQKLQIADLVAKLTNVTFHEKIGSLAEHMDRTRVIAASLAKEANLSAEEVTAVDRAAQIYKFDLLTGMVGEFDELQGIMGEKYARLAGEDAAVATAIREHYLPDAAGGALPETKVGAVLALADKLDTLLSFFSVGLIPSGSNDPYALRRATQGIVRILDHFGWRIPMDKLVDSLYDLSFDSLTYANKADVMNFIRARVDKMMGKAVPKDIREAVLESSTFVVPEMLAAAEALVKASHTENYKPAVESLSRAFNLAEKADASVHVDPSLFENEQENTLFAAIQGLTLAGSAAQQLEQVFVLSPVINDFFDNTMVMAEDQALKNNRLAILSDLVSKAKTIAAFNQLNTK.

This sequence belongs to the class-II aminoacyl-tRNA synthetase family. As to quaternary structure, tetramer of two alpha and two beta subunits.

It localises to the cytoplasm. The enzyme catalyses tRNA(Gly) + glycine + ATP = glycyl-tRNA(Gly) + AMP + diphosphate. This Streptococcus pyogenes serotype M3 (strain ATCC BAA-595 / MGAS315) protein is Glycine--tRNA ligase beta subunit.